The chain runs to 434 residues: Histidinol dehydrogenase (434 aa).

NAD(+) is bound by residues Tyr130, Gln188, and Asn211. Residues Ser237, Gln259, and His262 each coordinate substrate. 2 residues coordinate Zn(2+): Gln259 and His262. Active-site proton acceptor residues include Glu326 and His327. Substrate-binding residues include His327, Asp360, Glu414, and His419. Asp360 serves as a coordination point for Zn(2+). A Zn(2+)-binding site is contributed by His419.

The protein belongs to the histidinol dehydrogenase family. In terms of assembly, homodimer. It depends on Zn(2+) as a cofactor.

The enzyme catalyses L-histidinol + 2 NAD(+) + H2O = L-histidine + 2 NADH + 3 H(+). Its pathway is amino-acid biosynthesis; L-histidine biosynthesis; L-histidine from 5-phospho-alpha-D-ribose 1-diphosphate: step 9/9. Functionally, catalyzes the sequential NAD-dependent oxidations of L-histidinol to L-histidinaldehyde and then to L-histidine. This is Histidinol dehydrogenase from Salmonella paratyphi A (strain ATCC 9150 / SARB42).